The chain runs to 861 residues: ATP-dependent helicase rhp16 (861 aa).

Residues Met1–Asn13 are compositionally biased toward polar residues. The disordered stretch occupies residues Met1–His217. Composition is skewed to basic and acidic residues over residues Lys14–Leu23 and Val38–Glu57. The segment covering Leu60–Leu82 has biased composition (polar residues). The segment covering Ser83–Thr95 has biased composition (low complexity). Polar residues predominate over residues Asp96–Phe106. Residues Ala109–Phe123 are compositionally biased toward basic residues. Acidic residues predominate over residues Glu131–Glu145. The span at Ala193 to Arg204 shows a compositional bias: low complexity. Residues Arg268–Asp442 form the Helicase ATP-binding domain. Asp281–Thr288 serves as a coordination point for ATP. Residues Asp393–His396 carry the DEAH box motif. The segment at Cys609–Phe652 adopts an RING-type zinc-finger fold. Residues Leu695–Asn848 form the Helicase C-terminal domain.

The protein belongs to the SNF2/RAD54 helicase family.

It localises to the nucleus. In terms of biological role, involved in global genome repair (GGR) via nucleotide excision repair (NER), in conjunction with rhp7, after UV irradiation. The sequence is that of ATP-dependent helicase rhp16 (rhp16) from Schizosaccharomyces pombe (strain 972 / ATCC 24843) (Fission yeast).